We begin with the raw amino-acid sequence, 270 residues long: tRNA pseudouridine synthase A (270 aa).

The Nucleophile role is filled by D60. The interval 107–111 is RNA binding; that stretch reads FHARF. Y118 lines the substrate pocket. Positions 168–172 are interaction with tRNA; sequence QCQSR.

This sequence belongs to the tRNA pseudouridine synthase TruA family. As to quaternary structure, homodimer.

The enzyme catalyses uridine(38/39/40) in tRNA = pseudouridine(38/39/40) in tRNA. Formation of pseudouridine at positions 38, 39 and 40 in the anticodon stem and loop of transfer RNAs. In Enterobacter sp. (strain 638), this protein is tRNA pseudouridine synthase A.